The chain runs to 438 residues: Thymidine phosphorylase (438 aa).

Belongs to the thymidine/pyrimidine-nucleoside phosphorylase family. In terms of assembly, homodimer.

The enzyme catalyses thymidine + phosphate = 2-deoxy-alpha-D-ribose 1-phosphate + thymine. It functions in the pathway pyrimidine metabolism; dTMP biosynthesis via salvage pathway; dTMP from thymine: step 1/2. Its function is as follows. The enzymes which catalyze the reversible phosphorolysis of pyrimidine nucleosides are involved in the degradation of these compounds and in their utilization as carbon and energy sources, or in the rescue of pyrimidine bases for nucleotide synthesis. The protein is Thymidine phosphorylase of Colwellia psychrerythraea (strain 34H / ATCC BAA-681) (Vibrio psychroerythus).